Here is a 130-residue protein sequence, read N- to C-terminus: uncharacterized protein (130 aa).

A signal peptide spans 1–20 (MFNCLTKLVILVCLKYVAKA).

This is an uncharacterized protein from Saccharomyces cerevisiae (strain ATCC 204508 / S288c) (Baker's yeast).